Here is a 277-residue protein sequence, read N- to C-terminus: R-spondin-3 (277 aa).

The N-terminal stretch at 1–21 is a signal peptide; sequence MHLRLISCFFIILNFMEYIGS. FU repeat units follow at residues 35–86 and 92–135; these read PNVS…GYYG and INKC…GLEA. Asn-36 carries an N-linked (GlcNAc...) asparagine glycan. 11 disulfide bridges follow: Cys-41-Cys-48, Cys-45-Cys-54, Cys-57-Cys-76, Cys-80-Cys-95, Cys-98-Cys-105, Cys-102-Cys-111, Cys-114-Cys-125, Cys-129-Cys-142, Cys-148-Cys-190, Cys-159-Cys-166, and Cys-199-Cys-206. In terms of domain architecture, TSP type-1 spans 147–207; the sequence is HCEASEWSPW…TCIVQRKKCS (61 aa). Residues 210–277 form a disordered region; it reads ERGKKGRERK…QKSVSVSTVH (68 aa). Residues 213–223 are compositionally biased toward basic residues; it reads KKGRERKRKKL. The segment covering 232–245 has biased composition (low complexity); it reads SSSSDSKGLESSIE.

It belongs to the R-spondin family. As to quaternary structure, interacts with the extracellular domain of FZD8 and LRP6. It however does not form a ternary complex with FZD8 and LRP6. Interacts with WNT1. Binds heparin. Interacts with LGR4, LGR5 and LGR6. As to expression, highly expressed in endothelial cells.

It localises to the secreted. Activator of the canonical Wnt signaling pathway by acting as a ligand for LGR4-6 receptors, which acts as a key regulator of angiogenesis. Upon binding to LGR4-6 (LGR4, LGR5 or LGR6), LGR4-6 associate with phosphorylated LRP6 and frizzled receptors that are activated by extracellular Wnt receptors, triggering the canonical Wnt signaling pathway to increase expression of target genes. Also regulates the canonical Wnt/beta-catenin-dependent pathway and non-canonical Wnt signaling by acting as an inhibitor of ZNRF3, an important regulator of the Wnt signaling pathway. Acts as a ligand for frizzled FZD8 and LRP6. May negatively regulate the TGF-beta pathway. Acts as a key regulator of angiogenesis by controlling vascular stability and pruning: acts by activating the non-canonical Wnt signaling pathway in endothelial cells. Can also amplify Wnt signaling pathway independently of LGR4-6 receptors, possibly by acting as a direct antagonistic ligand to RNF43 and ZNRF3. This is R-spondin-3 (Rspo3) from Mus musculus (Mouse).